We begin with the raw amino-acid sequence, 225 residues long: 3-dehydroquinate dehydratase (225 aa).

Residues 30 to 32 (EWR) and arginine 62 each bind 3-dehydroquinate. The Proton donor/acceptor role is filled by histidine 118. The Schiff-base intermediate with substrate role is filled by lysine 143. 3-dehydroquinate contacts are provided by arginine 186, serine 205, and glutamine 209.

This sequence belongs to the type-I 3-dehydroquinase family. As to quaternary structure, homodimer.

The catalysed reaction is 3-dehydroquinate = 3-dehydroshikimate + H2O. Its pathway is metabolic intermediate biosynthesis; chorismate biosynthesis; chorismate from D-erythrose 4-phosphate and phosphoenolpyruvate: step 3/7. Its function is as follows. Involved in the third step of the chorismate pathway, which leads to the biosynthesis of aromatic amino acids. Catalyzes the cis-dehydration of 3-dehydroquinate (DHQ) and introduces the first double bond of the aromatic ring to yield 3-dehydroshikimate. In Streptococcus thermophilus (strain ATCC BAA-250 / LMG 18311), this protein is 3-dehydroquinate dehydratase.